The following is a 218-amino-acid chain: Large ribosomal subunit protein uL2c (218 aa).

The disordered stretch occupies residues 165–192; the sequence is GVVKNPVDHPHGGGEGRSPIGRSHPVTP.

The protein belongs to the universal ribosomal protein uL2 family. In terms of assembly, part of the 50S ribosomal subunit.

Its subcellular location is the plastid. The protein resides in the chloroplast. The polypeptide is Large ribosomal subunit protein uL2c (rpl2) (Bigelowiella natans (Pedinomonas minutissima)).